Reading from the N-terminus, the 107-residue chain is Universal stress protein B homolog (107 aa).

A run of 2 helical transmembrane segments spans residues 6–26 (IILFALMVVTGVNLARYLTAL) and 86–106 (VRELFVLSVSLTGVTLLAAFL).

The protein belongs to the universal stress protein B family.

It is found in the cell inner membrane. In Vibrio vulnificus (strain CMCP6), this protein is Universal stress protein B homolog.